The following is a 393-amino-acid chain: Short-chain dehydrogenase/reductase family 42E member 1 (393 aa).

Catalysis depends on Y152, which acts as the Proton acceptor. K156 lines the NAD(+) pocket. Helical transmembrane passes span 282-302 (LPLT…FILG) and 371-391 (GLLV…SVIL).

It belongs to the 3-beta-HSD family.

The protein localises to the membrane. This chain is Short-chain dehydrogenase/reductase family 42E member 1 (SDR42E1), found in Macaca fascicularis (Crab-eating macaque).